The sequence spans 999 residues: Tyrosine-protein kinase Mer (999 aa).

The first 20 residues, 1-20 (MGPAPLPLLLGLFLPALWRR), serve as a signal peptide directing secretion. The Extracellular portion of the chain corresponds to 21–505 (AITEAREEAK…PGNADPVLII (485 aa)). Ig-like C2-type domains follow at residues 81–186 (PQVT…EIVS) and 197–273 (PHFT…LTVS). N-linked (GlcNAc...) asparagine glycans are attached at residues Asn-114, Asn-170, Asn-207, Asn-215, Asn-234, Asn-294, Asn-316, Asn-329, Asn-336, Asn-354, Asn-389, Asn-395, Asn-442, and Asn-454. A disulfide bridge connects residues Cys-115 and Cys-175. The cysteines at positions 218 and 262 are disulfide-linked. 2 Fibronectin type-III domains span residues 286-381 (PPTE…TTEG) and 386-484 (APLN…PAHG). Residues 506-526 (FGCFCGFILIGLILYISLAIR) traverse the membrane as a helical segment. The Cytoplasmic portion of the chain corresponds to 527-999 (KRVQETKFGN…DSSEGSEVLM (473 aa)). Ser-543 is modified (phosphoserine). Residues 587–858 (LILGKILGEG…VLRLQLEKLL (272 aa)) enclose the Protein kinase domain. ATP is bound by residues 593–601 (LGEGEFGSV) and Lys-615. Residue Asp-723 is the Proton acceptor of the active site. Residues Tyr-749, Tyr-753, Tyr-754, and Tyr-872 each carry the phosphotyrosine; by autocatalysis modification. The residue at position 935 (Ser-935) is a Phosphoserine.

This sequence belongs to the protein kinase superfamily. Tyr protein kinase family. AXL/UFO subfamily. In terms of assembly, interacts (upon activation) with TNK2; stimulates TNK2 autophosphorylation. Interacts (via N-terminus) with extracellular ligands LGALS3, TUB, TULP1 and GAS6. Interacts with VAV1 in a phosphotyrosine-independent manner. Interacts with TIMD4; this interaction enhances TIMD4-mediated efferocytosis. In terms of processing, autophosphorylated on Tyr-749, Tyr-753 and Tyr-754 in the activation loop allowing full activity. Autophosphorylated on Tyr-872 leading to recruitment of downstream partners of the signaling cascade such as PLCG2. In terms of tissue distribution, not expressed in normal B- and T-lymphocytes but is expressed in numerous neoplastic B- and T-cell lines. Highly expressed in testis, ovary, prostate, lung, and kidney, with lower expression in spleen, small intestine, colon, and liver.

Its subcellular location is the cell membrane. The catalysed reaction is L-tyrosyl-[protein] + ATP = O-phospho-L-tyrosyl-[protein] + ADP + H(+). Its function is as follows. Receptor tyrosine kinase that transduces signals from the extracellular matrix into the cytoplasm by binding to several ligands including LGALS3, TUB, TULP1 or GAS6. Regulates many physiological processes including cell survival, migration, differentiation, and phagocytosis of apoptotic cells (efferocytosis). Ligand binding at the cell surface induces autophosphorylation of MERTK on its intracellular domain that provides docking sites for downstream signaling molecules. Following activation by ligand, interacts with GRB2 or PLCG2 and induces phosphorylation of MAPK1, MAPK2, FAK/PTK2 or RAC1. MERTK signaling plays a role in various processes such as macrophage clearance of apoptotic cells, platelet aggregation, cytoskeleton reorganization and engulfment. Functions in the retinal pigment epithelium (RPE) as a regulator of rod outer segments fragments phagocytosis. Also plays an important role in inhibition of Toll-like receptors (TLRs)-mediated innate immune response by activating STAT1, which selectively induces production of suppressors of cytokine signaling SOCS1 and SOCS3. This chain is Tyrosine-protein kinase Mer (MERTK), found in Homo sapiens (Human).